A 1413-amino-acid chain; its full sequence is DNA-directed RNA polymerase subunit beta' (1413 aa).

Cysteine 70, cysteine 72, cysteine 85, and cysteine 88 together coordinate Zn(2+). Mg(2+) is bound by residues aspartate 460, aspartate 462, and aspartate 464. Zn(2+)-binding residues include cysteine 814, cysteine 888, cysteine 895, and cysteine 898.

Belongs to the RNA polymerase beta' chain family. As to quaternary structure, the RNAP catalytic core consists of 2 alpha, 1 beta, 1 beta' and 1 omega subunit. When a sigma factor is associated with the core the holoenzyme is formed, which can initiate transcription. Mg(2+) is required as a cofactor. It depends on Zn(2+) as a cofactor.

The enzyme catalyses RNA(n) + a ribonucleoside 5'-triphosphate = RNA(n+1) + diphosphate. Functionally, DNA-dependent RNA polymerase catalyzes the transcription of DNA into RNA using the four ribonucleoside triphosphates as substrates. The protein is DNA-directed RNA polymerase subunit beta' of Buchnera aphidicola subsp. Schizaphis graminum (strain Sg).